Here is a 640-residue protein sequence, read N- to C-terminus: Protein UL35 (640 aa).

Disordered regions lie at residues 353–373 (ERGE…PREA), 500–571 (ASSS…PRQR), and 586–640 (AYSH…LRHL). The span at 358–367 (GDEDEEQEND) shows a compositional bias: acidic residues. A compositionally biased stretch (low complexity) spans 500–562 (ASSSSASSSS…LSGSHGISSA (63 aa)). Over residues 588–598 (SHHRRHRRRRS) the composition is skewed to basic residues. Basic and acidic residues predominate over residues 631 to 640 (DDLAENLRHL).

The protein belongs to the herpesviridae pp85 family. In terms of assembly, interacts with UL82. Interacts with isoform UL35A. Interacts with host UBP7; this interaction significantly inhibits the ability of USP7 to form nuclear bodies. Interacts with host DCAF1 (via C-terminus). Interacts with host SNX5; this interaction allows proper gB localization during viral assembly. Interacts with host TBK1; this interaction prevents type I interferon production. Interacts with UL82. Interacts with isoform UL35. Interacts with host UBP7; this interaction significantly inhibits the ability of USP7 to form nuclear bodies. Interacts with host SNX5; this interaction allows proper gB localization during viral assembly.

It localises to the virion tegument. The protein localises to the host nucleus. It is found in the host cytoplasm. Plays important role in immediate-early gene expression through interaction with UL82. Forms nuclear bodies in host nucleus, independently of PML. In turn, UL35 nuclear bodies associate with and remodel PML bodies. Through interaction with host DCAF1, causes cells to accumulate in the G2 phase of the cell cycle by inducing a DNA damage response. Regulates viral assembly by controlling the localization of the essential gB through regulation of a retrograde transport pathway. This modulation occurs via binding and inhibition of host sorting nexin 5/SNX5. Also plays a role in the inhibition of pattern recognition receptor-mediated type I interferon signaling at the level of TBK1. Functionally, promotes cytoplasmic UL82 accumulation and inhibits UL35-containing nuclear bodies formation. Regulates viral assembly by controlling the localization of the essential gB through regulation of a retrograde transport pathway. This modulation occurs via binding and inhibition of host sorting nexin 5/SNX5. The chain is Protein UL35 (UL35) from Homo sapiens (Human).